The chain runs to 130 residues: Albumin-1 F (130 aa).

Residues 1–26 form the signal peptide; it reads MASVKLASLIVLFATLGMFLTKNVGA. 3 disulfides stabilise this stretch: Cys-29/Cys-46, Cys-33/Cys-48, and Cys-41/Cys-58. Propeptides lie at residues 64 to 69 and 123 to 130; these read VFLRTN and LLKSVSTA.

The C-terminal glycine may be removed from PA1b.

Its function is as follows. PA1b binds to basic 7S globulin (BG) and stimulates its phosphorylation activity. Involved in the signal transduction system to regulate the growth and differentiation as a hormone peptide. Toxic to various insects through binding to a high affinity binding site in the insect gut. The polypeptide is Albumin-1 F (Pisum sativum (Garden pea)).